Consider the following 157-residue polypeptide: MSEQQNQEMTFQIQRIYTKDISFEAPNAPQVFQKEWQPEVKLDLDTSSNTLAENVYEVILRVTVTATMEEETAFLCEVQQAGIFTVEGIEGTQLAHCLGAYCPNVLFPYARECITNLVGRGTFPQLNLAPVNFDALFMNYLQQQQQQDAANSGVEEA.

The protein belongs to the SecB family. In terms of assembly, homotetramer, a dimer of dimers. One homotetramer interacts with 1 SecA dimer.

It localises to the cytoplasm. Functionally, one of the proteins required for the normal export of preproteins out of the cell cytoplasm. It is a molecular chaperone that binds to a subset of precursor proteins, maintaining them in a translocation-competent state. It also specifically binds to its receptor SecA. The chain is Protein-export protein SecB from Proteus mirabilis (strain HI4320).